The primary structure comprises 1001 residues: MPSTNRAGSLKDPEIAELFFKEDPEKLFTDLREIGHGSFGAVYFARDVRTNEVVAIKKMSYSGKQSTEKWQDIIKEVKFLQRIKHPNSIEYKGCYLREHTAWLVMEYCLGSASDLLEVHKKPLQEVEIAAITHGALQGLAYLHSHTMIHRDIKAGNILLTEPGQVKLADFGSASMASPANSFVGTPYWMAPEVILAMDEGQYDGKVDVWSLGITCIELAERKPPLFNMNAMSALYHIAQNESPTLQSNEWSDYFRNFVDSCLQKIPQDRPTSEELLKHMFVLRERPETVLIDLIQRTKDAVRELDNLQYRKMKKLLFQEAHNGPAVEAQEEEEEQDHGGGRTGTVNSVGSNQSIPSMSISASSQSSSVNSLPDASDDKSELDMMEGDHTVMSNSSVIHLKPEEENYQEEGDPRTRASAPQSPPQVSRHKSHYRNREHFATIRTASLVTRQMQEHEQDSELREQMSGYKRMRRQHQKQLMTLENKLKAEMDEHRLRLDKDLETQRNNFAAEMEKLIKKHQASMEKEAKVMANEEKKFQQHIQAQQKKELNSFLESQKREYKLRKEQLKEELNENQSTPKKEKQEWLSKQKENIQHFQAEEEANLLRRQRQYLELECRRFKRRMLLGRHNLEQDLVREELNKRQTQKDLEHAMLLRQHESMQELEFRHLNTIQKMRCELIRLQHQTELTNQLEYNKRRERELRRKHVMEVRQQPKSLKSKELQIKKQFQDTCKIQTRQYKALRNHLLETTPKSEHKAVLKRLKEEQTRKLAILAEQYDHSINEMLSTQALRLDEAQEAECQVLKMQLQQELELLNAYQSKIKMQAEAQHDRELRELEQRVSLRRALLEQKIEEEMLALQNERTERIRSLLERQAREIEAFDSESMRLGFSNMVLSNLSPEAFSHSYPGASSWSHNPTGGSGPHWGHPMGGTPQAWGHPMQGGPQPWGHPSGPMQGVPRGSSIGVRNSPQALRRTASGGRTEQGMSRSTSVTSQISNGSHMSYT.

Residue Ser-9 is modified to Phosphoserine. The Protein kinase domain maps to 28-281; that stretch reads FTDLREIGHG…SEELLKHMFV (254 aa). ATP-binding positions include 34–42 and Lys-57; that span reads IGHGSFGAV. Catalysis depends on Asp-151, which acts as the Proton acceptor. Disordered stretches follow at residues 324–380 and 404–431; these read PAVE…DKSE and ENYQ…HKSH. The span at 350 to 370 shows a compositional bias: low complexity; the sequence is SNQSIPSMSISASSQSSSVNS. Residues Ser-421 and Ser-445 each carry the phosphoserine modification. Positions 458-651 form a coiled coil; the sequence is SELREQMSGY…QTQKDLEHAM (194 aa). A disordered region spans residues 567-587; that stretch reads KEELNENQSTPKKEKQEWLSK. Residues 577 to 587 are compositionally biased toward basic and acidic residues; it reads PKKEKQEWLSK. Thr-669 carries the phosphothreonine modification. Residues 754 to 877 are a coiled coil; it reads KAVLKRLKEE…LERQAREIEA (124 aa). The disordered stretch occupies residues 905–1001; sequence PGASSWSHNP…ISNGSHMSYT (97 aa). Residues 906-915 are compositionally biased toward polar residues; sequence GASSWSHNPT. Ser-965 bears the Phosphoserine mark. The span at 975-1001 shows a compositional bias: polar residues; the sequence is GGRTEQGMSRSTSVTSQISNGSHMSYT.

Belongs to the protein kinase superfamily. STE Ser/Thr protein kinase family. STE20 subfamily. As to quaternary structure, self-associates. Interacts with MAP2K3. Interacts with SPRED1. Interacts with TESK1; the interaction inhibits TAOK1 kinase activity. Interacts with MAP3K7. Post-translationally, proteolytically processed by caspase-3 (CASP3). In terms of processing, autophosphorylated. Phosphorylated by ATM in response to DNA damage. Phosphorylated by LRRK2.

The protein resides in the cytoplasm. The catalysed reaction is L-seryl-[protein] + ATP = O-phospho-L-seryl-[protein] + ADP + H(+). The enzyme catalyses L-threonyl-[protein] + ATP = O-phospho-L-threonyl-[protein] + ADP + H(+). With respect to regulation, serine/threonine-protein kinase activity is inhibited by SPRED1. Its function is as follows. Serine/threonine-protein kinase involved in various processes such as p38/MAPK14 stress-activated MAPK cascade, DNA damage response and regulation of cytoskeleton stability. Phosphorylates MAP2K3, MAP2K6 and MARK2. Acts as an activator of the p38/MAPK14 stress-activated MAPK cascade by mediating phosphorylation and subsequent activation of the upstream MAP2K3 and MAP2K6 kinases. Involved in G-protein coupled receptor signaling to p38/MAPK14. In response to DNA damage, involved in the G2/M transition DNA damage checkpoint by activating the p38/MAPK14 stress-activated MAPK cascade, probably by mediating phosphorylation of MAP2K3 and MAP2K6. Acts as a regulator of cytoskeleton stability by phosphorylating 'Thr-208' of MARK2, leading to activate MARK2 kinase activity and subsequent phosphorylation and detachment of MAPT/TAU from microtubules. Also acts as a regulator of apoptosis: regulates apoptotic morphological changes, including cell contraction, membrane blebbing and apoptotic bodies formation via activation of the MAPK8/JNK cascade. During fetal development, it plays an essential role in the regulation of neuronal differentiation and migration to the cortical plate. The polypeptide is Serine/threonine-protein kinase TAO1 (Taok1) (Rattus norvegicus (Rat)).